Here is a 563-residue protein sequence, read N- to C-terminus: TSET complex member tstC (563 aa).

Disordered regions lie at residues 146-170 (SPHQPPHYNTHHHTSTPSVAPSFIT), 192-213 (NSLSNSISNSNSNNNNNNNNDS), 235-298 (VLNS…NYNN), 376-395 (HPNAGKEAKEKEKEKENEFK), and 428-563 (GSAS…FLNF). Over residues 379–395 (AGKEAKEKEKEKENEFK) the composition is skewed to basic and acidic residues. Positions 428 to 459 (GSASSKSSPSTSPLSSSYNPSSPETSENSFSA) are enriched in low complexity. Over residues 460–473 (TPISDSNSLKNSID) the composition is skewed to polar residues. Composition is skewed to low complexity over residues 474-487 (NNNNNNNNNNNNNN) and 507-543 (NNSKSSLSTSNSNISTPDNGASSPLASSTSGSASSAA). The segment covering 552–563 (NSAKTKMNFLNF) has biased composition (polar residues).

In terms of assembly, component of the TSET complex, a heterohexamer composed of tstA, tstB, tstC, tstD, tstE and tstF, which may act in plasma membrane turnover. tstA, tstB, tstC and tstD are likely to be the core complex members with tstE and tstF acting as associated scaffold proteins.

The polypeptide is TSET complex member tstC (Dictyostelium discoideum (Social amoeba)).